The sequence spans 83 residues: UPF0248 protein PH1212.1 (83 aa).

The protein belongs to the UPF0248 family.

In Pyrococcus horikoshii (strain ATCC 700860 / DSM 12428 / JCM 9974 / NBRC 100139 / OT-3), this protein is UPF0248 protein PH1212.1.